A 640-amino-acid chain; its full sequence is Probable potassium transport system protein Kup 1 (640 aa).

Transmembrane regions (helical) follow at residues 24 to 44, 67 to 87, 116 to 136, 154 to 174, 186 to 206, 222 to 242, 264 to 284, 296 to 316, 354 to 374, 382 to 402, 411 to 431, and 436 to 456; these read LGAL…TSPL, IASL…VLFV, VGPL…DGMI, PFFA…LFTI, FGPV…TEVV, TFLF…VLAV, WFAL…ALIL, MLVP…ATVI, IYIP…VVGF, AAYG…ALVV, LWLC…FLGA, and VTQG…LMAT.

This sequence belongs to the HAK/KUP transporter (TC 2.A.72) family.

Its subcellular location is the cell inner membrane. The enzyme catalyses K(+)(in) + H(+)(in) = K(+)(out) + H(+)(out). In terms of biological role, transport of potassium into the cell. Likely operates as a K(+):H(+) symporter. This is Probable potassium transport system protein Kup 1 from Paramagnetospirillum magneticum (strain ATCC 700264 / AMB-1) (Magnetospirillum magneticum).